Reading from the N-terminus, the 327-residue chain is GMP reductase (327 aa).

The active-site Thioimidate intermediate is Cys-176. 205-228 (IIADGGIRTHGDIAKSIRFGASMV) contributes to the NADP(+) binding site.

Belongs to the IMPDH/GMPR family. GuaC type 2 subfamily.

It carries out the reaction IMP + NH4(+) + NADP(+) = GMP + NADPH + 2 H(+). Its function is as follows. Catalyzes the irreversible NADPH-dependent deamination of GMP to IMP. It functions in the conversion of nucleobase, nucleoside and nucleotide derivatives of G to A nucleotides, and in maintaining the intracellular balance of A and G nucleotides. The polypeptide is GMP reductase (Streptococcus pyogenes serotype M5 (strain Manfredo)).